Reading from the N-terminus, the 138-residue chain is Odorant-binding protein 22 (138 aa).

The N-terminal stretch at 1-16 (MKVFIAVFALIAVAAA) is a signal peptide. Arg30 lines the (5Z,8Z,11Z,14Z)-eicosatetraenoate pocket. Arg30 and Tyr61 together coordinate (9Z)-hexadecenoate. The (9Z,12Z)-octadecadienoate site is built by Arg30 and Tyr61. 3 disulfides stabilise this stretch: Cys33–Cys64, Cys60–Cys113, and Cys103–Cys122. Asn127 carries N-linked (GlcNAc...) asparagine glycosylation.

The protein belongs to the PBP/GOBP family. As to quaternary structure, monomer in solution. In terms of tissue distribution, high-level expression in female mouth parts, particularly in the proboscis (at protein level). Moderate-level expression in female antenna (at protein level). Expressed in testis but not in the accessory gland or ejaculatory duct (at protein level). Expressed in spermathecae (at protein level). Female salivary gland. Female chemosensory organs: antenna, palp and proboscis. Not detected in midgut.

It localises to the secreted. Its function is as follows. Involved in modulation of blood-feeding behavior and capacity in female mosquitoes. Required for normal oviposition. Required for normal fecundity and fertility of female and male mosquitoes. Required for normal expression of VGA1 gene, which encodes the egg yolk protein vitellogenin-A1. Involved in regulation of spermatozoa development. Required for normal female longevity when mosquitoes are maintained on regular sugar meal. Binds long chain fatty acids. Functionally, (Microbial infection) Facilitates shedding of dengue virus type 2 particles into mosquito saliva. Does not affect dengue virus type 2 replication or infection prevalence in midgut and salivary glands at 14 days after blood feeding. In terms of biological role, (Microbial infection) Facilitates shedding of Zika virus particles into mosquito saliva. Does not affect Zika virus replication or infection prevalence in midgut and salivary glands at 14 days after blood feeding. The protein is Odorant-binding protein 22 of Aedes aegypti (Yellowfever mosquito).